A 309-amino-acid chain; its full sequence is Calcium homeostasis modulator protein 5 (309 aa).

Residues 1-15 are Cytoplasmic-facing; sequence MDAFQSILKFFLNQK. Residues 16 to 37 form a helical membrane-spanning segment; it reads TAIGYSFMALLTVGSERLFSLV. The a 1,2-diacyl-sn-glycero-3-phosphate site is built by R32 and V37. The Extracellular segment spans residues 38 to 45; sequence AFKCPCSV. Intrachain disulfides connect C41–C127, C43–C158, and C142–C149. The chain crosses the membrane as a helical span at residues 46-70; the sequence is ENTAYGLVFLFAPAWVLLILGFFLN. At 71-99 the chain is on the cytoplasmic side; that stretch reads NKAWRLFTGCCMNPKKIFPRRRCCRFFYV. Residues 100-129 traverse the membrane as a helical segment; that stretch reads LGHIILSSLVAPVMWLSVALLNGTFYECAM. N121 contacts a 1,2-diacyl-sn-glycero-3-phosphate. Residues 130-174 are Extracellular-facing; it reads SGTRSTRLLEMICKGKPKECWEELHKVSCGKSSMAAMESEEVRLS. Residues 175–200 traverse the membrane as a helical segment; the sequence is LQAQSQILGWCLICSASFLSLLTTCY. Over 201–309 the chain is Cytoplasmic; that stretch reads ARCRSKVSYL…MILVGTAQSL (109 aa). R202 contacts a 1,2-diacyl-sn-glycero-3-phosphate.

This sequence belongs to the CALHM family. In terms of assembly, oligomerizes to form undecameric cone-shaped channels.

Its subcellular location is the membrane. Functionally, may assemble to form large pore channels with gating and ion conductance likely regulated by membrane lipids. The chain is Calcium homeostasis modulator protein 5 from Mus musculus (Mouse).